We begin with the raw amino-acid sequence, 27 residues long: uncharacterized protein (27 aa).

Its subcellular location is the plastid. The protein resides in the chloroplast. This is an uncharacterized protein from Marchantia polymorpha (Common liverwort).